Reading from the N-terminus, the 105-residue chain is Diuretic hormone class 2 (105 aa).

The first 23 residues, 1-23, serve as a signal peptide directing secretion; that stretch reads MTVLCTLMAFVMVVAISSLTVDA. A propeptide spanning residues 24–63 is cleaved from the precursor; sequence IPHSHESYWDQQDDIDRDEFLELLSRLSRTVMNRPEMENS. A Proline amide modification is found at P96. A propeptide spanning residues 101 to 105 is cleaved from the precursor; the sequence is RSEQA.

In terms of tissue distribution, expressed in central brain, antennal lobes, retrocerebral complex and gnathal, thoracic and abdominal ganglia but not in optical lobes (at protein level).

The protein localises to the secreted. Its function is as follows. Regulation of fluid secretion. Stimulates Malpighian tubules fluid secretion. The sequence is that of Diuretic hormone class 2 from Camponotus floridanus (Florida carpenter ant).